The following is a 432-amino-acid chain: Enolase (432 aa).

Gln-167 contacts (2R)-2-phosphoglycerate. Residue Glu-209 is the Proton donor of the active site. Residues Asp-246, Glu-290, and Asp-317 each coordinate Mg(2+). 4 residues coordinate (2R)-2-phosphoglycerate: Lys-342, Arg-371, Ser-372, and Lys-393. Lys-342 (proton acceptor) is an active-site residue.

The protein belongs to the enolase family. Component of the RNA degradosome, a multiprotein complex involved in RNA processing and mRNA degradation. It depends on Mg(2+) as a cofactor.

Its subcellular location is the cytoplasm. It localises to the secreted. The protein resides in the cell surface. The enzyme catalyses (2R)-2-phosphoglycerate = phosphoenolpyruvate + H2O. It functions in the pathway carbohydrate degradation; glycolysis; pyruvate from D-glyceraldehyde 3-phosphate: step 4/5. Functionally, catalyzes the reversible conversion of 2-phosphoglycerate (2-PG) into phosphoenolpyruvate (PEP). It is essential for the degradation of carbohydrates via glycolysis. In Escherichia coli O139:H28 (strain E24377A / ETEC), this protein is Enolase.